The primary structure comprises 307 residues: UDP-3-O-acyl-N-acetylglucosamine deacetylase (307 aa).

Zn(2+) contacts are provided by His78, His235, and Asp239. Residue His262 is the Proton donor of the active site.

The protein belongs to the LpxC family. The cofactor is Zn(2+).

The enzyme catalyses a UDP-3-O-[(3R)-3-hydroxyacyl]-N-acetyl-alpha-D-glucosamine + H2O = a UDP-3-O-[(3R)-3-hydroxyacyl]-alpha-D-glucosamine + acetate. Its pathway is glycolipid biosynthesis; lipid IV(A) biosynthesis; lipid IV(A) from (3R)-3-hydroxytetradecanoyl-[acyl-carrier-protein] and UDP-N-acetyl-alpha-D-glucosamine: step 2/6. Catalyzes the hydrolysis of UDP-3-O-myristoyl-N-acetylglucosamine to form UDP-3-O-myristoylglucosamine and acetate, the committed step in lipid A biosynthesis. The polypeptide is UDP-3-O-acyl-N-acetylglucosamine deacetylase (Geotalea uraniireducens (strain Rf4) (Geobacter uraniireducens)).